A 728-amino-acid chain; its full sequence is Catalase-peroxidase (728 aa).

The segment at residues 91–218 is a cross-link (tryptophyl-tyrosyl-methioninium (Trp-Tyr) (with M-244)); the sequence is WHSAGTYRTA…LAAVQMGLIY (128 aa). H92 functions as the Proton acceptor in the catalytic mechanism. The segment at residues 218 to 244 is a cross-link (tryptophyl-tyrosyl-methioninium (Tyr-Met) (with W-91)); sequence YVNPEGPDGNPDPVAAARDIRDTFARM. Residue H259 coordinates heme b.

It belongs to the peroxidase family. Peroxidase/catalase subfamily. In terms of assembly, homodimer or homotetramer. The cofactor is heme b. Formation of the three residue Trp-Tyr-Met cross-link is important for the catalase, but not the peroxidase activity of the enzyme.

It carries out the reaction H2O2 + AH2 = A + 2 H2O. The catalysed reaction is 2 H2O2 = O2 + 2 H2O. Bifunctional enzyme with both catalase and broad-spectrum peroxidase activity. The sequence is that of Catalase-peroxidase from Burkholderia pseudomallei (strain 1710b).